The sequence spans 327 residues: MLKKYLPLLLLCAAPAFAKPVLTVYTYDSFAADWGPGPAVKKAFEADCNCELKLVALEDGVSLLNRLRMEGKNSKADVVLGLDNNLLEAATQTKLFAKSGVANEAVKVPGGWKNDTFVPFDYGYFAFVYDKSKLKNPPKSLKELVESDQKWRVIYQDPRTSTPGLGLLLWMRKVYGDNAPQAWQKLAAKTVTVTKGWSEAYGLFLKGESDLVLSYTTSPAYHIIEEKKDNYAAANFSEGHYLQVEVAARTVASKQPELAEKFLKFMVSPAFQNAIPTGNWMYPVADVALPAGFESLAKPATTLEFTPQQVAAQRQAWISEWQRAVSR.

Residues 1 to 18 form the signal peptide; sequence MLKKYLPLLLLCAAPAFA. Residues 59–60, 161–162, Trp-197, and 215–218 contribute to the thiamine site; these read DG, ST, and YTTS.

This sequence belongs to the bacterial solute-binding protein 1 family. As to quaternary structure, the complex is composed of two ATP-binding proteins (ThiQ), two transmembrane proteins (ThiP) and a solute-binding protein (ThiB).

It is found in the periplasm. In terms of biological role, part of the ABC transporter complex ThiBPQ involved in thiamine import. Is also involved in thiamine pyrophosphate transport. This is Thiamine-binding periplasmic protein from Salmonella typhimurium (strain LT2 / SGSC1412 / ATCC 700720).